We begin with the raw amino-acid sequence, 631 residues long: Beta-galactosidase-1-like protein 3 (631 aa).

E203 serves as the catalytic Proton donor. E277 (nucleophile) is an active-site residue.

This sequence belongs to the glycosyl hydrolase 35 family.

This chain is Beta-galactosidase-1-like protein 3 (Glb1l3), found in Rattus norvegicus (Rat).